Reading from the N-terminus, the 680-residue chain is Tumor protein 63 (680 aa).

The transcription activation stretch occupies residues 1-107 (MNFETSRCAT…MQDSDLSDPM (107 aa)). Residues 123 to 157 (QIQNGSSSTSPYNTDHAQNSVTAPSPYAQPSSTFD) are compositionally biased toward polar residues. A disordered region spans residues 123 to 171 (QIQNGSSSTSPYNTDHAQNSVTAPSPYAQPSSTFDALSPSPAIPSNTDY). A DNA-binding region spans residues 170-362 (DYPGPHSFDV…KADEDSIRKQ (193 aa)). Residues cysteine 244, histidine 247, cysteine 308, and cysteine 312 each contribute to the Zn(2+) site. Over residues 351–360 (DRKADEDSIR) the composition is skewed to basic and acidic residues. Disordered stretches follow at residues 351–393 (DRKA…IKKR) and 435–472 (YRQQ…MNSM). The segment at 352 to 388 (RKADEDSIRKQQVSDSTKNGDGTKRPFRQNTHGIQMT) is interaction with HIPK2. Composition is skewed to polar residues over residues 361–371 (KQQVSDSTKNG) and 379–389 (RQNTHGIQMTS). Positions 394 to 443 (RSPDDELLYLPVRGRETYEMLLKIKESLELMQYLPQHTIETYRQQQQQQH) are oligomerization. The segment covering 437–450 (QQQQQQHQHLLQKQ) has biased composition (low complexity). The segment covering 451-472 (TSIQSPSSYGNSSPPLNKMNSM) has biased composition (polar residues). An SAM domain is found at 541 to 607 (PPYPTDCSIV…WKGILDHRQL (67 aa)). Positions 610 to 680 (FSSPSHLLRT…KQQRIKEEGE (71 aa)) are transactivation inhibition. Lysine 676 participates in a covalent cross-link: Glycyl lysine isopeptide (Lys-Gly) (interchain with G-Cter in SUMO).

The protein belongs to the p53 family. Binds DNA as a homotetramer. Isoform composition of the tetramer may determine transactivation activity. Isoforms Alpha and Gamma interact with HIPK2. Interacts with SSRP1, leading to stimulate coactivator activity. Isoform 1 and isoform 2 interact with WWP1. Interacts with PDS5A. Isoform 5 (via activation domain) interacts with NOC2L. Zn(2+) is required as a cofactor. In terms of processing, may be sumoylated. Ubiquitinated. Polyubiquitination involves WWP1 and leads to proteasomal degradation of this protein. Widely expressed, notably in heart, kidney, placenta, prostate, skeletal muscle, testis and thymus, although the precise isoform varies according to tissue type. Progenitor cell layers of skin, breast, eye and prostate express high levels of DeltaN-type isoforms. Isoform 10 is predominantly expressed in skin squamous cell carcinomas, but not in normal skin tissues.

It is found in the nucleus. Functionally, acts as a sequence specific DNA binding transcriptional activator or repressor. The isoforms contain a varying set of transactivation and auto-regulating transactivation inhibiting domains thus showing an isoform specific activity. Isoform 2 activates RIPK4 transcription. May be required in conjunction with TP73/p73 for initiation of p53/TP53 dependent apoptosis in response to genotoxic insults and the presence of activated oncogenes. Involved in Notch signaling by probably inducing JAG1 and JAG2. Plays a role in the regulation of epithelial morphogenesis. The ratio of DeltaN-type and TA*-type isoforms may govern the maintenance of epithelial stem cell compartments and regulate the initiation of epithelial stratification from the undifferentiated embryonal ectoderm. Required for limb formation from the apical ectodermal ridge. Activates transcription of the p21 promoter. The sequence is that of Tumor protein 63 (TP63) from Homo sapiens (Human).